A 243-amino-acid chain; its full sequence is MPFTFKQFHVDDSHCGMPVSTDGVLLGAWAPLTQAKTILDIGAGSGLLSLMAAQRSEAVIQALEIDPLAAQDCQHNIDQSPWSDRITLIQADLLQWYPLAQTQAQTQFDHILCNPPYFDNGPQSQCSKRAQARHTDSLAFDQLLSAIKQLLAPTGKASLILPNASLGRFLPLLAEFKLKLSARVDITTAPNKAPQRHLLCLSHAVSSAESSEAIEAEHLSIRDASGAYSQAMVALTQAFYLKL.

Belongs to the methyltransferase superfamily. tRNA (adenine-N(6)-)-methyltransferase family.

Its subcellular location is the cytoplasm. It catalyses the reaction adenosine(37) in tRNA1(Val) + S-adenosyl-L-methionine = N(6)-methyladenosine(37) in tRNA1(Val) + S-adenosyl-L-homocysteine + H(+). Functionally, specifically methylates the adenine in position 37 of tRNA(1)(Val) (anticodon cmo5UAC). This chain is tRNA1(Val) (adenine(37)-N6)-methyltransferase, found in Shewanella loihica (strain ATCC BAA-1088 / PV-4).